Consider the following 257-residue polypeptide: 5'-nucleotidase SurE (257 aa).

The a divalent metal cation site is built by D9, D10, S40, and N92.

It belongs to the SurE nucleotidase family. The cofactor is a divalent metal cation.

The protein resides in the cytoplasm. It catalyses the reaction a ribonucleoside 5'-phosphate + H2O = a ribonucleoside + phosphate. Its function is as follows. Nucleotidase that shows phosphatase activity on nucleoside 5'-monophosphates. The polypeptide is 5'-nucleotidase SurE (Alkalilimnicola ehrlichii (strain ATCC BAA-1101 / DSM 17681 / MLHE-1)).